A 597-amino-acid chain; its full sequence is Probable translation initiation factor IF-2 (597 aa).

The region spanning 13–229 (LRTPIVCVMG…LLGLAQKFLE (217 aa)) is the tr-type G domain. A G1 region spans residues 22–29 (GHVDHGKT). 22-29 (GHVDHGKT) provides a ligand contact to GTP. The tract at residues 47–51 (AITQH) is G2. Positions 84–87 (DTPG) are G3. Residues 84-88 (DTPGH) and 138-141 (NKID) contribute to the GTP site. The G4 stretch occupies residues 138–141 (NKID). A G5 region spans residues 206–208 (SAV).

Belongs to the TRAFAC class translation factor GTPase superfamily. Classic translation factor GTPase family. IF-2 subfamily.

Function in general translation initiation by promoting the binding of the formylmethionine-tRNA to ribosomes. Seems to function along with eIF-2. The sequence is that of Probable translation initiation factor IF-2 from Methanosarcina acetivorans (strain ATCC 35395 / DSM 2834 / JCM 12185 / C2A).